Reading from the N-terminus, the 500-residue chain is L-arabinose isomerase (500 aa).

Glu306, Glu333, His349, and His448 together coordinate Mn(2+).

Belongs to the arabinose isomerase family. Mn(2+) serves as cofactor.

The enzyme catalyses beta-L-arabinopyranose = L-ribulose. The protein operates within carbohydrate degradation; L-arabinose degradation via L-ribulose; D-xylulose 5-phosphate from L-arabinose (bacterial route): step 1/3. Its function is as follows. Catalyzes the conversion of L-arabinose to L-ribulose. This chain is L-arabinose isomerase, found in Shewanella baltica (strain OS223).